The primary structure comprises 351 residues: Inner kinetochore subunit fta2 (351 aa).

The interval 1–71 (MSGRRYSQIS…SSNGRVDTDR (71 aa)) is disordered. The segment covering 7-18 (SQISQQEGSSSS) has biased composition (low complexity). Residues 54–66 (NENSGQSKSSNGR) show a composition bias toward polar residues.

It belongs to the CENP-P/CTF19 family. As to quaternary structure, component of the heterotetrameric kinetochore subcomplex COMA, which consists of fta2, fta7, mal2 and mis17. The COMA subcomplex is part of a larger constitutive centromere-associated network (CCAN) (also known as central kinetochore Sim4 complex in fission yeast), which is composed of at least cnl2, cnp3, cnp20, fta1, fta2, fta3, fta4, fta6, fta7, mal2, mhf1, mhf2, mis6, mis15, mis17, sim4 and wip1.

The protein localises to the nucleus. The protein resides in the chromosome. Its subcellular location is the centromere. It localises to the kinetochore. Functionally, component of the kinetochore, a multiprotein complex that assembles on centromeric DNA and attaches chromosomes to spindle microtubules, mediating chromosome segregation and sister chromatid segregation during meiosis and mitosis. Component of the inner kinetochore COMA complex, which connects centromere-associated proteins and the outer kinetochore. COMA interacts with other inner kinetochore proteins to form the inner kinetochore constitutive centromere-associated network (CCAN), which serves as a structural platform for outer kinetochore assembly. Fta2, fta3 and fta4 associate with the central core (cnt) and inner repeat (inr) region of the centromere. The protein is Inner kinetochore subunit fta2 (fta2) of Schizosaccharomyces pombe (strain 972 / ATCC 24843) (Fission yeast).